The following is a 245-amino-acid chain: 5-oxoprolinase subunit A (245 aa).

This sequence belongs to the LamB/PxpA family. Forms a complex composed of PxpA, PxpB and PxpC.

It carries out the reaction 5-oxo-L-proline + ATP + 2 H2O = L-glutamate + ADP + phosphate + H(+). Functionally, catalyzes the cleavage of 5-oxoproline to form L-glutamate coupled to the hydrolysis of ATP to ADP and inorganic phosphate. This Cronobacter sakazakii (strain ATCC BAA-894) (Enterobacter sakazakii) protein is 5-oxoprolinase subunit A.